Here is a 194-residue protein sequence, read N- to C-terminus: Probable GTP-binding protein EngB (194 aa).

The EngB-type G domain maps to 23–194 (DKMEFAFVGR…LNFMEEKLNN (172 aa)). Residues 31 to 38 (GRSNVGKS), 58 to 62 (GRTQL), 76 to 79 (DLPG), 142 to 145 (TKID), and 173 to 175 (HSS) contribute to the GTP site. Serine 38 and threonine 60 together coordinate Mg(2+).

This sequence belongs to the TRAFAC class TrmE-Era-EngA-EngB-Septin-like GTPase superfamily. EngB GTPase family. The cofactor is Mg(2+).

Its function is as follows. Necessary for normal cell division and for the maintenance of normal septation. The sequence is that of Probable GTP-binding protein EngB from Fusobacterium nucleatum subsp. nucleatum (strain ATCC 25586 / DSM 15643 / BCRC 10681 / CIP 101130 / JCM 8532 / KCTC 2640 / LMG 13131 / VPI 4355).